The primary structure comprises 214 residues: Protein FAM167A (214 aa).

Disordered stretches follow at residues Met1–His26 and Pro59–Gly108. Residues Glu118–Thr156 adopt a coiled-coil conformation.

This sequence belongs to the FAM167 (SEC) family. As to expression, expressed in skin, including primary keratinocytes, spleen, kidney, leukocytes, testis, lung, small intestine and prostate.

The sequence is that of Protein FAM167A (FAM167A) from Homo sapiens (Human).